The sequence spans 354 residues: Dual-specificity RNA methyltransferase RlmN (354 aa).

The Proton acceptor role is filled by glutamate 89. The Radical SAM core domain maps to 106–339; that stretch reads KEAKYTVCVS…CTIRKSKGMD (234 aa). Cysteine 113 and cysteine 344 are oxidised to a cystine. [4Fe-4S] cluster is bound by residues cysteine 120, cysteine 124, and cysteine 127. S-adenosyl-L-methionine-binding positions include 170–171, serine 202, 225–227, and asparagine 301; these read GE and SLH. Cysteine 344 serves as the catalytic S-methylcysteine intermediate.

This sequence belongs to the radical SAM superfamily. RlmN family. It depends on [4Fe-4S] cluster as a cofactor.

It is found in the cytoplasm. The enzyme catalyses adenosine(2503) in 23S rRNA + 2 reduced [2Fe-2S]-[ferredoxin] + 2 S-adenosyl-L-methionine = 2-methyladenosine(2503) in 23S rRNA + 5'-deoxyadenosine + L-methionine + 2 oxidized [2Fe-2S]-[ferredoxin] + S-adenosyl-L-homocysteine. The catalysed reaction is adenosine(37) in tRNA + 2 reduced [2Fe-2S]-[ferredoxin] + 2 S-adenosyl-L-methionine = 2-methyladenosine(37) in tRNA + 5'-deoxyadenosine + L-methionine + 2 oxidized [2Fe-2S]-[ferredoxin] + S-adenosyl-L-homocysteine. Functionally, specifically methylates position 2 of adenine 2503 in 23S rRNA and position 2 of adenine 37 in tRNAs. m2A2503 modification seems to play a crucial role in the proofreading step occurring at the peptidyl transferase center and thus would serve to optimize ribosomal fidelity. The chain is Dual-specificity RNA methyltransferase RlmN from Nautilia profundicola (strain ATCC BAA-1463 / DSM 18972 / AmH).